Here is a 151-residue protein sequence, read N- to C-terminus: Large ribosomal subunit protein bL9 (151 aa).

This sequence belongs to the bacterial ribosomal protein bL9 family.

Functionally, binds to the 23S rRNA. The sequence is that of Large ribosomal subunit protein bL9 from Chlorobium limicola (strain DSM 245 / NBRC 103803 / 6330).